A 310-amino-acid polypeptide reads, in one-letter code: Pantothenate kinase (310 aa).

An ATP-binding site is contributed by 95-102 (GSVAVGKS).

It belongs to the prokaryotic pantothenate kinase family.

The protein localises to the cytoplasm. The enzyme catalyses (R)-pantothenate + ATP = (R)-4'-phosphopantothenate + ADP + H(+). The protein operates within cofactor biosynthesis; coenzyme A biosynthesis; CoA from (R)-pantothenate: step 1/5. This chain is Pantothenate kinase, found in Rhodococcus opacus (strain B4).